The sequence spans 292 residues: Probable ABC transporter permease protein YurN (292 aa).

A run of 6 helical transmembrane segments spans residues 7–27 (IIPY…YIPI), 70–90 (VLYA…LAAV), 106–126 (VFFL…DFIY), 160–180 (VIFV…IVSI), 215–235 (FVAV…PYIL), and 260–280 (MMGY…ALSL). The 217-residue stretch at 66–282 (LTNNVLYAVI…IITLALSLMQ (217 aa)) folds into the ABC transmembrane type-1 domain.

Belongs to the binding-protein-dependent transport system permease family. MalFG subfamily.

It is found in the cell membrane. Functionally, probably part of the binding-protein-dependent transport system YurMNO. Probably responsible for the translocation of the substrate across the membrane. This Bacillus subtilis (strain 168) protein is Probable ABC transporter permease protein YurN (yurN).